A 95-amino-acid chain; its full sequence is Aspartyl/glutamyl-tRNA(Asn/Gln) amidotransferase subunit C (95 aa).

This sequence belongs to the GatC family. As to quaternary structure, heterotrimer of A, B and C subunits.

The catalysed reaction is L-glutamyl-tRNA(Gln) + L-glutamine + ATP + H2O = L-glutaminyl-tRNA(Gln) + L-glutamate + ADP + phosphate + H(+). It catalyses the reaction L-aspartyl-tRNA(Asn) + L-glutamine + ATP + H2O = L-asparaginyl-tRNA(Asn) + L-glutamate + ADP + phosphate + 2 H(+). Its function is as follows. Allows the formation of correctly charged Asn-tRNA(Asn) or Gln-tRNA(Gln) through the transamidation of misacylated Asp-tRNA(Asn) or Glu-tRNA(Gln) in organisms which lack either or both of asparaginyl-tRNA or glutaminyl-tRNA synthetases. The reaction takes place in the presence of glutamine and ATP through an activated phospho-Asp-tRNA(Asn) or phospho-Glu-tRNA(Gln). The protein is Aspartyl/glutamyl-tRNA(Asn/Gln) amidotransferase subunit C of Rhodopseudomonas palustris (strain BisB5).